Consider the following 285-residue polypeptide: 4-hydroxybenzoate octaprenyltransferase (285 aa).

Helical transmembrane passes span 19-39, 42-62, 82-102, 104-124, 136-156, 166-186, 210-230, 233-253, and 265-285; these read IGSL…ADGL, WHVL…GCVI, LPSG…LVVC, FLLV…GIVL, YLPQ…AYAA, WLLF…YAMV, IIGL…SQLA, GIYY…QWLI, and FLNN…SVLI.

This sequence belongs to the UbiA prenyltransferase family. Mg(2+) is required as a cofactor.

Its subcellular location is the cell inner membrane. The enzyme catalyses all-trans-octaprenyl diphosphate + 4-hydroxybenzoate = 4-hydroxy-3-(all-trans-octaprenyl)benzoate + diphosphate. The protein operates within cofactor biosynthesis; ubiquinone biosynthesis. Its function is as follows. Catalyzes the prenylation of para-hydroxybenzoate (PHB) with an all-trans polyprenyl group. Mediates the second step in the final reaction sequence of ubiquinone-8 (UQ-8) biosynthesis, which is the condensation of the polyisoprenoid side chain with PHB, generating the first membrane-bound Q intermediate 3-octaprenyl-4-hydroxybenzoate. This is 4-hydroxybenzoate octaprenyltransferase from Aliivibrio fischeri (strain ATCC 700601 / ES114) (Vibrio fischeri).